We begin with the raw amino-acid sequence, 267 residues long: Hydroxyacylglutathione hydrolase (267 aa).

The Zn(2+) site is built by His-55, His-57, Asp-59, His-60, His-121, Asp-138, and His-176.

This sequence belongs to the metallo-beta-lactamase superfamily. Glyoxalase II family. Monomer. Requires Zn(2+) as cofactor.

The catalysed reaction is an S-(2-hydroxyacyl)glutathione + H2O = a 2-hydroxy carboxylate + glutathione + H(+). It functions in the pathway secondary metabolite metabolism; methylglyoxal degradation; (R)-lactate from methylglyoxal: step 2/2. Functionally, thiolesterase that catalyzes the hydrolysis of S-D-lactoyl-glutathione to form glutathione and D-lactic acid. The protein is Hydroxyacylglutathione hydrolase of Shewanella oneidensis (strain ATCC 700550 / JCM 31522 / CIP 106686 / LMG 19005 / NCIMB 14063 / MR-1).